A 386-amino-acid chain; its full sequence is Alanine racemase 1 (386 aa).

Residue K38 is the Proton acceptor; specific for D-alanine of the active site. K38 is modified (N6-(pyridoxal phosphate)lysine). R136 is a binding site for substrate. The Proton acceptor; specific for L-alanine role is filled by Y267. Position 315 (M315) interacts with substrate.

It belongs to the alanine racemase family. The cofactor is pyridoxal 5'-phosphate.

It catalyses the reaction L-alanine = D-alanine. The protein operates within amino-acid biosynthesis; D-alanine biosynthesis; D-alanine from L-alanine: step 1/1. Catalyzes the interconversion of L-alanine and D-alanine. May also act on other amino acids. The sequence is that of Alanine racemase 1 (alr1) from Clostridium acetobutylicum (strain ATCC 824 / DSM 792 / JCM 1419 / IAM 19013 / LMG 5710 / NBRC 13948 / NRRL B-527 / VKM B-1787 / 2291 / W).